The sequence spans 407 residues: Peptidase T (407 aa).

Residue His-81 participates in Zn(2+) binding. The active site involves Asp-83. Asp-142 is a binding site for Zn(2+). The active-site Proton acceptor is the Glu-176. Residues Glu-177, Asp-199, and His-381 each contribute to the Zn(2+) site.

Belongs to the peptidase M20B family. Requires Zn(2+) as cofactor.

It is found in the cytoplasm. The catalysed reaction is Release of the N-terminal residue from a tripeptide.. In terms of biological role, cleaves the N-terminal amino acid of tripeptides. The chain is Peptidase T from Streptococcus pneumoniae (strain Hungary19A-6).